Reading from the N-terminus, the 736-residue chain is Epithelial splicing regulatory protein 2 (736 aa).

3 consecutive RRM domains span residues 224-301 (TVIR…KATG), 325-405 (MIIR…RSTA), and 659-736 (ALVR…ACCE).

It belongs to the ESRP family.

The protein resides in the nucleus. Its function is as follows. mRNA splicing factor that regulates the formation of epithelial cell-specific isoforms. Specifically regulates the expression of FGFR2-IIIb, an epithelial cell-specific isoform of fgfr2. Acts by directly binding specific sequences in mRNAs. Binds the GU-rich sequence motifs in the ISE/ISS-3, a cis-element regulatory region present in the mRNA of fgfr2. This chain is Epithelial splicing regulatory protein 2 (esrp2), found in Danio rerio (Zebrafish).